We begin with the raw amino-acid sequence, 253 residues long: Hydroxyacylglutathione hydrolase (253 aa).

Zn(2+) contacts are provided by His54, His56, Asp58, His59, His112, Asp131, and His169.

The protein belongs to the metallo-beta-lactamase superfamily. Glyoxalase II family. In terms of assembly, monomer. It depends on Zn(2+) as a cofactor.

The catalysed reaction is an S-(2-hydroxyacyl)glutathione + H2O = a 2-hydroxy carboxylate + glutathione + H(+). It functions in the pathway secondary metabolite metabolism; methylglyoxal degradation; (R)-lactate from methylglyoxal: step 2/2. In terms of biological role, thiolesterase that catalyzes the hydrolysis of S-D-lactoyl-glutathione to form glutathione and D-lactic acid. This Bartonella henselae (strain ATCC 49882 / DSM 28221 / CCUG 30454 / Houston 1) (Rochalimaea henselae) protein is Hydroxyacylglutathione hydrolase.